The chain runs to 146 residues: Large ribosomal subunit protein uL11 (146 aa).

Belongs to the universal ribosomal protein uL11 family. Part of the ribosomal stalk of the 50S ribosomal subunit. Interacts with L10 and the large rRNA to form the base of the stalk. L10 forms an elongated spine to which L12 dimers bind in a sequential fashion forming a multimeric L10(L12)X complex. In terms of processing, one or more lysine residues are methylated.

Its function is as follows. Forms part of the ribosomal stalk which helps the ribosome interact with GTP-bound translation factors. The polypeptide is Large ribosomal subunit protein uL11 (Salinibacter ruber (strain DSM 13855 / M31)).